A 291-amino-acid polypeptide reads, in one-letter code: Methylsterol monooxygenase 1 (291 aa).

2 helical membrane passes run 55–75 and 100–120; these read LIVH…FQFL and MLLF…YYFT. One can recognise a Fatty acid hydroxylase domain in the interval 145–274; it reads CAVIEDTWHY…FTWWDRLFDT (130 aa). A Histidine box-1 motif is present at residues 157–161; it reads HRALH. Residues 170-174 carry the Histidine box-2 motif; the sequence is HKVHH. The chain crosses the membrane as a helical span at residues 199 to 219; sequence FFIGTMVFCNHMILLWAWVTF. The Histidine box-3 motif lies at 249–255; it reads FHDFHHM.

It belongs to the sterol desaturase family. Requires Fe cation as cofactor.

It localises to the endoplasmic reticulum membrane. It catalyses the reaction 4,4-dimethyl-5alpha-cholest-7-en-3beta-ol + 6 Fe(II)-[cytochrome b5] + 3 O2 + 5 H(+) = 4alpha-carboxy-4beta-methyl-5alpha-cholest-7-ene-3beta-ol + 6 Fe(III)-[cytochrome b5] + 4 H2O. Its pathway is steroid biosynthesis; zymosterol biosynthesis; zymosterol from lanosterol: step 3/6. In terms of biological role, catalyzes the first step in the removal of the two C-4 methyl groups of 4,4-dimethylzymosterol. This chain is Methylsterol monooxygenase 1 (msmo1), found in Danio rerio (Zebrafish).